The following is a 575-amino-acid chain: RecBCD enzyme subunit RecD (575 aa).

170–177 (GGPGTGKT) contacts ATP.

It belongs to the RecD family. In terms of assembly, heterotrimer of RecB, RecC and RecD. All subunits contribute to DNA-binding.

It catalyses the reaction Couples ATP hydrolysis with the unwinding of duplex DNA at the replication fork by translocating in the 5'-3' direction. This creates two antiparallel DNA single strands (ssDNA). The leading ssDNA polymer is the template for DNA polymerase III holoenzyme which synthesizes a continuous strand.. The catalysed reaction is ATP + H2O = ADP + phosphate + H(+). Functionally, a helicase/nuclease that prepares dsDNA breaks (DSB) for recombinational DNA repair. Binds to DSBs and unwinds DNA via a highly rapid and processive ATP-dependent bidirectional helicase activity. Holoenzyme degrades any linearized DNA that is unable to undergo homologous recombination. In the holoenzyme this subunit has ssDNA-dependent ATPase and 5'-3' helicase activity. When added to pre-assembled RecBC greatly stimulates nuclease activity and augments holoenzyme processivity. Unlike the case in E.coli, suppresses RecA-dependent homologous recombination, is instead required for single-strand annealing pathway repair of DSB. Its function is as follows. A helicase/nuclease that prepares dsDNA breaks (DSB) for recombinational DNA repair. Binds to DSBs and unwinds DNA via a highly rapid and processive ATP-dependent bidirectional helicase activity. Unwinds dsDNA until it encounters a Chi (crossover hotspot instigator) sequence from the 3' direction. Cuts ssDNA a few nucleotides 3' to the Chi site. The properties and activities of the enzyme are changed at Chi. The Chi-altered holoenzyme produces a long 3'-ssDNA overhang and facilitates RecA-binding to the ssDNA for homologous DNA recombination and repair. Holoenzyme degrades any linearized DNA that is unable to undergo homologous recombination. In the holoenzyme this subunit has ssDNA-dependent ATPase and 5'-3' helicase activity. When added to pre-assembled RecBC greatly stimulates nuclease activity and augments holoenzyme processivity. Negatively regulates the RecA-loading ability of RecBCD. This Mycobacterium tuberculosis (strain CDC 1551 / Oshkosh) protein is RecBCD enzyme subunit RecD.